A 261-amino-acid polypeptide reads, in one-letter code: MTHQTHAYHMVNPSPWPLTGALSALLMTSGLIMWFHFNSMYLLMLGLTTNTLTMYQWWRDIVRESTFQGHHTPIVQKGLRYGMILFIVSEVFFFAGFFWAFYHSSLAPTPELGGCWPPTGITPLNPMEVPLLNTSVLLASGVSITWAHHSLMEGNRKHMLQALFITISLGVYFTLLQASEYYETPFTISDGIYGSTFFMATGFHGLHVIIGSTFLIVCFMRQLKFHFTSNHHFGFEAAAWYWHFVDVVWLFLYVSIYWWGS.

The Mitochondrial matrix segment spans residues 1 to 15 (MTHQTHAYHMVNPSP). The chain crosses the membrane as a helical span at residues 16–34 (WPLTGALSALLMTSGLIMW). Over 35 to 40 (FHFNSM) the chain is Mitochondrial intermembrane. Residues 41–66 (YLLMLGLTTNTLTMYQWWRDIVREST) form a helical membrane-spanning segment. Residues 67 to 72 (FQGHHT) lie on the Mitochondrial matrix side of the membrane. The chain crosses the membrane as a helical span at residues 73–105 (PIVQKGLRYGMILFIVSEVFFFAGFFWAFYHSS). The Mitochondrial intermembrane segment spans residues 106-128 (LAPTPELGGCWPPTGITPLNPME). Residues 129–152 (VPLLNTSVLLASGVSITWAHHSLM) form a helical membrane-spanning segment. Residues 153 to 155 (EGN) lie on the Mitochondrial matrix side of the membrane. The chain crosses the membrane as a helical span at residues 156 to 183 (RKHMLQALFITISLGVYFTLLQASEYYE). Residues 184-190 (TPFTISD) lie on the Mitochondrial intermembrane side of the membrane. The chain crosses the membrane as a helical span at residues 191–223 (GIYGSTFFMATGFHGLHVIIGSTFLIVCFMRQL). Topologically, residues 224–232 (KFHFTSNHH) are mitochondrial matrix. The chain crosses the membrane as a helical span at residues 233 to 256 (FGFEAAAWYWHFVDVVWLFLYVSI). Topologically, residues 257–261 (YWWGS) are mitochondrial intermembrane.

This sequence belongs to the cytochrome c oxidase subunit 3 family. As to quaternary structure, component of the cytochrome c oxidase (complex IV, CIV), a multisubunit enzyme composed of 14 subunits. The complex is composed of a catalytic core of 3 subunits MT-CO1, MT-CO2 and MT-CO3, encoded in the mitochondrial DNA, and 11 supernumerary subunits COX4I, COX5A, COX5B, COX6A, COX6B, COX6C, COX7A, COX7B, COX7C, COX8 and NDUFA4, which are encoded in the nuclear genome. The complex exists as a monomer or a dimer and forms supercomplexes (SCs) in the inner mitochondrial membrane with NADH-ubiquinone oxidoreductase (complex I, CI) and ubiquinol-cytochrome c oxidoreductase (cytochrome b-c1 complex, complex III, CIII), resulting in different assemblies (supercomplex SCI(1)III(2)IV(1) and megacomplex MCI(2)III(2)IV(2)).

The protein localises to the mitochondrion inner membrane. It carries out the reaction 4 Fe(II)-[cytochrome c] + O2 + 8 H(+)(in) = 4 Fe(III)-[cytochrome c] + 2 H2O + 4 H(+)(out). In terms of biological role, component of the cytochrome c oxidase, the last enzyme in the mitochondrial electron transport chain which drives oxidative phosphorylation. The respiratory chain contains 3 multisubunit complexes succinate dehydrogenase (complex II, CII), ubiquinol-cytochrome c oxidoreductase (cytochrome b-c1 complex, complex III, CIII) and cytochrome c oxidase (complex IV, CIV), that cooperate to transfer electrons derived from NADH and succinate to molecular oxygen, creating an electrochemical gradient over the inner membrane that drives transmembrane transport and the ATP synthase. Cytochrome c oxidase is the component of the respiratory chain that catalyzes the reduction of oxygen to water. Electrons originating from reduced cytochrome c in the intermembrane space (IMS) are transferred via the dinuclear copper A center (CU(A)) of subunit 2 and heme A of subunit 1 to the active site in subunit 1, a binuclear center (BNC) formed by heme A3 and copper B (CU(B)). The BNC reduces molecular oxygen to 2 water molecules using 4 electrons from cytochrome c in the IMS and 4 protons from the mitochondrial matrix. This chain is Cytochrome c oxidase subunit 3 (MT-CO3), found in Halichoerus grypus (Gray seal).